The sequence spans 499 residues: Argininosuccinate lyase (499 aa).

The tract at residues 1 to 22 (MSDGEDHETANADDRDETVVRR) is disordered. A compositionally biased stretch (basic and acidic residues) spans 7–22 (HETANADDRDETVVRR).

The protein belongs to the lyase 1 family. Argininosuccinate lyase subfamily.

It is found in the cytoplasm. The catalysed reaction is 2-(N(omega)-L-arginino)succinate = fumarate + L-arginine. It functions in the pathway amino-acid biosynthesis; L-arginine biosynthesis; L-arginine from L-ornithine and carbamoyl phosphate: step 3/3. In Haloarcula marismortui (strain ATCC 43049 / DSM 3752 / JCM 8966 / VKM B-1809) (Halobacterium marismortui), this protein is Argininosuccinate lyase.